We begin with the raw amino-acid sequence, 381 residues long: Erythronate-4-phosphate dehydrogenase (381 aa).

2 residues coordinate substrate: S45 and T66. NAD(+)-binding residues include D146 and T173. R206 is a catalytic residue. An NAD(+)-binding site is contributed by D230. Residue E235 is part of the active site. Catalysis depends on H252, which acts as the Proton donor. Residue G255 participates in NAD(+) binding. Substrate is bound at residue Y256.

The protein belongs to the D-isomer specific 2-hydroxyacid dehydrogenase family. PdxB subfamily. Homodimer.

The protein resides in the cytoplasm. It catalyses the reaction 4-phospho-D-erythronate + NAD(+) = (R)-3-hydroxy-2-oxo-4-phosphooxybutanoate + NADH + H(+). It functions in the pathway cofactor biosynthesis; pyridoxine 5'-phosphate biosynthesis; pyridoxine 5'-phosphate from D-erythrose 4-phosphate: step 2/5. Catalyzes the oxidation of erythronate-4-phosphate to 3-hydroxy-2-oxo-4-phosphonooxybutanoate. This Hahella chejuensis (strain KCTC 2396) protein is Erythronate-4-phosphate dehydrogenase.